Here is a 100-residue protein sequence, read N- to C-terminus: Small ubiquitin-related modifier 1 (100 aa).

Positions 1–12 (MSAAGEEDKKPA) are enriched in basic and acidic residues. Residues 1-23 (MSAAGEEDKKPAGGEGGGAHINL) are disordered. The 78-residue stretch at 19 to 96 (AHINLKVKGQ…IDAMLHQTGG (78 aa)) folds into the Ubiquitin-like domain. G96 participates in a covalent cross-link: Glycyl lysine isopeptide (Gly-Lys) (interchain with K-? in acceptor proteins).

This sequence belongs to the ubiquitin family. SUMO subfamily. As to quaternary structure, interacts with SAE2, SCE1 and SIZ1. Covalently attached to a number of proteins.

It localises to the nucleus. It is found in the cytoplasm. Ubiquitin-like protein which can be covalently attached to target lysines as a monomer. Does not seem to be involved in protein degradation and may function as an antagonist of ubiquitin in the degradation process. The sequence is that of Small ubiquitin-related modifier 1 (SUMO1) from Oryza sativa subsp. japonica (Rice).